A 582-amino-acid chain; its full sequence is MHNDKDLSTWQTFRRLWPTIAPFKAGLIVAGVALILNAASDTFMLSLLKPLLDDGFGKTDRSVLVWMPLVVIGLMILRGITSYVSSYCISWVSGKVVMTMRRRLFGHMMGMPVSFFDKQSTGTLLSRITYDSEQVASSSSGALITVVREGASIIGLFIMMFYYSWQLSIILIVLAPIVSIAIRVVSKRFRNISKNMQNTMGQVTTSAEQMLKGHKEVLIFGGQEVETKRFDKVSNRMRLQGMKMVSASSISDPIIQLIASLALAFVLYAASFPSVMDNLTAGTITVVFSSMIALMRPLKSLTNVNAQFQRGMAACQTLFTILDSEQEKDEGKRVIERATGDVEFRNVTFTYPGRDVPALRNINLKIPAGKTVALVGRSGSGKSTIASLITRFYDIDEGEILMDGHDLREYTLASLRNQVALVSQNVHLFNDTVANNIAYARTEQYSREQIEEAARMAYAMDFINKMDNGLDTVIGENGVLLSGGQRQRIAIARALLRDSPILILDEATSALDTESERAIQAALDELQKNRTSLVIAHRLSTIEKADEIVVVEDGVIVERGTHNDLLEHRGVYAQLHKMQFGQ.

Helical transmembrane passes span Leu16–Leu36, Val63–Tyr83, Ile153–Val173, Pro253–Pro273, and Val275–Met295. The ABC transmembrane type-1 domain maps to Ile28–Arg310. The 237-residue stretch at Val342 to Met578 folds into the ABC transporter domain. ATP is bound at residue Gly376–Ser383.

The protein belongs to the ABC transporter superfamily. Lipid exporter (TC 3.A.1.106) family. In terms of assembly, homodimer.

The protein localises to the cell inner membrane. It carries out the reaction ATP + H2O + lipid A-core oligosaccharideSide 1 = ADP + phosphate + lipid A-core oligosaccharideSide 2.. Involved in lipopolysaccharide (LPS) biosynthesis. Translocates lipid A-core from the inner to the outer leaflet of the inner membrane. Transmembrane domains (TMD) form a pore in the inner membrane and the ATP-binding domain (NBD) is responsible for energy generation. The polypeptide is ATP-dependent lipid A-core flippase (Shigella flexneri).